Here is a 589-residue protein sequence, read N- to C-terminus: Vesicular glutamate transporter 3 (589 aa).

Over 1–76 (MPFKAFDTFK…CHCCGLPKRY (76 aa)) the chain is Cytoplasmic. The segment covering 40–49 (TEEEDNIELN) has biased composition (acidic residues). Residues 40–61 (TEEEDNIELNEEGRPVQTSRPS) form a disordered region. Residues 77 to 97 (IIAIMSGLGFCISFGIRCNLG) form a helical membrane-spanning segment. Residues 98–130 (VAIVEMVNNSTVYVDGKPEIQTAQFNWDPETVG) lie on the Vesicular side of the membrane. N-linked (GlcNAc...) asparagine glycosylation occurs at asparagine 106. The chain crosses the membrane as a helical span at residues 131 to 151 (LIHGSFFWGYIMTQIPGGFIS). Residues 152 to 153 (NK) lie on the Cytoplasmic side of the membrane. The chain crosses the membrane as a helical span at residues 154 to 174 (FAANRVFGAAIFLTSTLNMFI). Residues 175-182 (PSAARVHY) lie on the Vesicular side of the membrane. Residues 183–203 (GCVMCVRILQGLVEGVTYPAC) traverse the membrane as a helical segment. The Cytoplasmic portion of the chain corresponds to 204–221 (HGMWSKWAPPLERSRLAT). A helical membrane pass occupies residues 222-242 (TSFCGSYAGAVVAMPLAGVLV). Residues 243–249 (QYIGWSS) are Vesicular-facing. The helical transmembrane segment at 250–270 (VFYIYGMFGIIWYMFWLLQAY) threads the bilayer. Residues 271-314 (ECPAAHPTISNEEKTYIETSIGEGANVVSLSKFSTPWKRFFTSL) are Cytoplasmic-facing. Residues 315–335 (PVYAIIVANFCRSWTFYLLLI) form a helical membrane-spanning segment. The Vesicular segment spans residues 336-353 (SQPAYFEEVFGFAISKVG). A helical transmembrane segment spans residues 354–374 (LLSAVPHMVMTIVVPIGGQLA). Residues 375–390 (DYLRSRQILTTTAVRK) are Cytoplasmic-facing. Residues 391-411 (IMNCGGFGMEATLLLVVGFSH) form a helical membrane-spanning segment. Topologically, residues 412 to 413 (TK) are vesicular. Residues 414–434 (GVAISFLVLAVGFSGFAISGF) form a helical membrane-spanning segment. At 435-447 (NVNHLDIAPRYAS) the chain is on the cytoplasmic side. Residues 448-468 (ILMGISNGVGTLSGMVCPLIV) form a helical membrane-spanning segment. Topologically, residues 469–481 (GAMTRHKTREEWQ) are vesicular. The helical transmembrane segment at 482 to 502 (NVFLIAALVHYSGVIFYGVFA) threads the bilayer. The Cytoplasmic portion of the chain corresponds to 503 to 586 (SGEKQEWADP…SYQNEERNFS (84 aa)). The segment at 559–589 (KKEWKGQRGATLDEEELTSYQNEERNFSTIS) is disordered. Over residues 580-589 (NEERNFSTIS) the composition is skewed to basic and acidic residues.

It belongs to the major facilitator superfamily. Sodium/anion cotransporter family. VGLUT subfamily. Expressed in amygdala, cerebellum, hippocampus, medulla, spinal cord and thalamus.

It localises to the cytoplasmic vesicle. Its subcellular location is the secretory vesicle. The protein localises to the synaptic vesicle membrane. The protein resides in the cell membrane. It is found in the synapse. It localises to the synaptosome. The enzyme catalyses L-glutamate(out) = L-glutamate(in). The catalysed reaction is 3 Na(+)(out) + phosphate(out) = 3 Na(+)(in) + phosphate(in). It catalyses the reaction chloride(in) = chloride(out). The L-glutamate uniporter activity exhibits a biphasic dependence on chloride concentration. Chloride channel activity is allosterically activated by lumenal H(+) and Cl(-) leading to synaptic vesicles acidification. The glutamate transport activity is allosterically activated by lumenal H(+) and Cl(-), preventing non-vesicular L-glutamate release. Functionally, multifunctional transporter that transports L-glutamate as well as multiple ions such as chloride, sodium and phosphate. At the synaptic vesicle membrane, mainly functions as an uniporter that mediates the uptake of L-glutamate into synaptic vesicles at presynaptic nerve terminals of excitatory neural cells. The L-glutamate uniporter activity is electrogenic and is driven by the proton electrochemical gradient, mainly by the electrical gradient established by the vacuolar H(+)-ATPase across the synaptic vesicle membrane. In addition, functions as a chloride channel that allows a chloride permeation through the synaptic vesicle membrane that affects the proton electrochemical gradient and promotes synaptic vesicles acidification. At the plasma membrane, following exocytosis, functions as a symporter of Na(+) and phosphate from the extracellular space to the cytoplasm allowing synaptic phosphate homeostasis regulation. The symporter activity is electrogenic. Moreover, operates synergistically with SLC18A3/VACHT under a constant H(+) gradient, thereby allowing striatal vesicular acetylcholine uptake. In Homo sapiens (Human), this protein is Vesicular glutamate transporter 3.